Here is a 502-residue protein sequence, read N- to C-terminus: Glycerol kinase (502 aa).

Residue Thr-13 coordinates ADP. 3 residues coordinate ATP: Thr-13, Thr-14, and Ser-15. Thr-13 serves as a coordination point for sn-glycerol 3-phosphate. Residue Arg-17 coordinates ADP. Residues Arg-83, Glu-84, Tyr-136, and Asp-246 each contribute to the sn-glycerol 3-phosphate site. Positions 83, 84, 136, 246, and 247 each coordinate glycerol. Residues Thr-268 and Gly-311 each coordinate ADP. The ATP site is built by Thr-268, Gly-311, Gln-315, and Gly-412. Residues Gly-412 and Asn-416 each contribute to the ADP site.

The protein belongs to the FGGY kinase family.

The catalysed reaction is glycerol + ATP = sn-glycerol 3-phosphate + ADP + H(+). It participates in polyol metabolism; glycerol degradation via glycerol kinase pathway; sn-glycerol 3-phosphate from glycerol: step 1/1. Inhibited by fructose 1,6-bisphosphate (FBP). In terms of biological role, key enzyme in the regulation of glycerol uptake and metabolism. Catalyzes the phosphorylation of glycerol to yield sn-glycerol 3-phosphate. The protein is Glycerol kinase of Francisella tularensis subsp. tularensis (strain WY96-3418).